The following is a 537-amino-acid chain: Tyrosine-protein kinase Fyn (537 aa).

Residue Gly2 is the site of N-myristoyl glycine attachment. S-palmitoyl cysteine attachment occurs at residues Cys3 and Cys6. Phosphothreonine; by PKC is present on Thr12. The disordered stretch occupies residues 14-35 (LTEERDGSLNQSSGYRYGTDPT). Phosphoserine occurs at positions 21 and 26. Residues 82 to 143 (TGVTLFVALY…PSNYVAPVDS (62 aa)) form the SH3 domain. An SH2 domain is found at 149–246 (WYFGKLGRKD…GLCCRLVVPC (98 aa)). Tyr185 is modified (phosphotyrosine). A Protein kinase domain is found at 271–524 (LQLIKRLGNG…YLQGFLEDYF (254 aa)). Residues 277–285 (LGNGQFGEV) and Lys299 each bind ATP. Asp390 functions as the Proton acceptor in the catalytic mechanism. A Phosphotyrosine; by autocatalysis modification is found at Tyr420. At Tyr531 the chain carries Phosphotyrosine; by CSK.

It belongs to the protein kinase superfamily. Tyr protein kinase family. SRC subfamily. In terms of assembly, interacts (via its SH3 domain) with PIK3R1 and PRMT8. Interacts with FYB1, PAG1, and SH2D1A. Interacts with CD79A (tyrosine-phosphorylated form); the interaction increases FYN activity. Interacts (via SH2 domain) with CSF1R (tyrosine phosphorylated). Interacts with TOM1L1 (phosphorylated form). Interacts with KDR (tyrosine phosphorylated). Interacts (via SH3 domain) with KLHL2 (via N-terminus). Interacts with SH2D1A and SLAMF1. Interacts with ITCH; the interaction phosphorylates ITCH and negatively regulates its activity. Interacts with FASLG. Interacts with RUNX3. Interacts with KIT. Interacts with EPHA8; possible downstream effector of EPHA8 in regulation of cell adhesion. Interacts with PTK2/FAK1; this interaction leads to PTK2/FAK1 phosphorylation and activation. Interacts with CAV1; this interaction couples integrins to the Ras-ERK pathway. Interacts with UNC119. Interacts (via SH2 domain) with PTPRH (phosphorylated form). Interacts with PTPRO (phosphorylated form). Interacts with PTPRB (phosphorylated form). Interacts with FYB2. Interacts with DSCAM. Interacts with SKAP1 and FYB1; this interaction promotes the phosphorylation of CLNK. Interacts with NEDD9; in the presence of PTK2. Mn(2+) serves as cofactor. In terms of processing, autophosphorylated at Tyr-420. Phosphorylation on the C-terminal tail at Tyr-531 by CSK maintains the enzyme in an inactive state. PTPRC/CD45 dephosphorylates Tyr-531 leading to activation. Ultraviolet B (UVB) strongly increase phosphorylation at Thr-12 and kinase activity, and promotes translocation from the cytoplasm to the nucleus. Dephosphorylation at Tyr-420 by PTPN2 negatively regulates T-cell receptor signaling. Phosphorylated at tyrosine residues, which can be enhanced by NTN1. Post-translationally, palmitoylated. Palmitoylation at Cys-3 and Cys-6, probably by ZDHHC21, regulates subcellular location.

It localises to the cytoplasm. The protein resides in the nucleus. The protein localises to the cell membrane. Its subcellular location is the perikaryon. It catalyses the reaction L-tyrosyl-[protein] + ATP = O-phospho-L-tyrosyl-[protein] + ADP + H(+). Inhibited by phosphorylation of Tyr-531 by leukocyte common antigen and activated by dephosphorylation of this site. Non-receptor tyrosine-protein kinase that plays a role in many biological processes including regulation of cell growth and survival, cell adhesion, integrin-mediated signaling, cytoskeletal remodeling, cell motility, immune response and axon guidance. Inactive FYN is phosphorylated on its C-terminal tail within the catalytic domain. Following activation by PKA, the protein subsequently associates with PTK2/FAK1, allowing PTK2/FAK1 phosphorylation, activation and targeting to focal adhesions. Involved in the regulation of cell adhesion and motility through phosphorylation of CTNNB1 (beta-catenin) and CTNND1 (delta-catenin). Regulates cytoskeletal remodeling by phosphorylating several proteins including the actin regulator WAS and the microtubule-associated proteins MAP2 and MAPT. Promotes cell survival by phosphorylating AGAP2/PIKE-A and preventing its apoptotic cleavage. Participates in signal transduction pathways that regulate the integrity of the glomerular slit diaphragm (an essential part of the glomerular filter of the kidney) by phosphorylating several slit diaphragm components including NPHS1, KIRREL1 and TRPC6. Plays a role in neural processes by phosphorylating DPYSL2, a multifunctional adapter protein within the central nervous system, ARHGAP32, a regulator for Rho family GTPases implicated in various neural functions, and SNCA, a small pre-synaptic protein. Involved in reelin signaling by mediating phosphorylation of DAB1 following reelin (RELN)-binding to its receptor. Participates in the downstream signaling pathways that lead to T-cell differentiation and proliferation following T-cell receptor (TCR) stimulation. Phosphorylates PTK2B/PYK2 in response to T-cell receptor activation. Also participates in negative feedback regulation of TCR signaling through phosphorylation of PAG1, thereby promoting interaction between PAG1 and CSK and recruitment of CSK to lipid rafts. CSK maintains LCK and FYN in an inactive form. Promotes CD28-induced phosphorylation of VAV1. In mast cells, phosphorylates CLNK after activation of immunoglobulin epsilon receptor signaling. Can also promote CD244-mediated NK cell activation. This is Tyrosine-protein kinase Fyn from Bos taurus (Bovine).